The sequence spans 115 residues: Large ribosomal subunit protein P2 (115 aa).

At Met1 the chain carries N-acetylmethionine. A phosphoserine mark is found at Ser17 and Ser19. Lys21 is modified (N6-acetyllysine; alternate). Lys21 bears the N6-succinyllysine; alternate mark. Residues 76–90 (APGSAAPAAGSAPAA) show a composition bias toward low complexity. Residues 76–115 (APGSAAPAAGSAPAAAEEKKDEKKEESEESDDDMGFGLFD) form a disordered region. 2 positions are modified to phosphoserine: Ser79 and Ser86. The segment covering 91 to 101 (AEEKKDEKKEE) has biased composition (basic and acidic residues). Residues Ser102 and Ser105 each carry the phosphoserine modification.

Belongs to the eukaryotic ribosomal protein P1/P2 family. In terms of assembly, heterodimer with RPLP1 at the lateral ribosomal stalk of the large ribosomal subunit.

Its function is as follows. Plays an important role in the elongation step of protein synthesis. The polypeptide is Large ribosomal subunit protein P2 (Rplp2) (Mus musculus (Mouse)).